The following is a 275-amino-acid chain: Dolichyl-diphosphooligosaccharide--protein glycosyltransferase subunit delta (275 aa).

The signal sequence occupies residues methionine 1–alanine 18. 3 helical membrane passes run valine 179 to isoleucine 199, valine 214 to valine 234, and serine 241 to valine 261.

Belongs to the SWP1 family. As to quaternary structure, component of the oligosaccharyltransferase (OST) complex.

Its subcellular location is the endoplasmic reticulum membrane. The protein operates within protein modification; protein glycosylation. Subunit of the oligosaccharyl transferase (OST) complex that catalyzes the initial transfer of a defined glycan (Glc(3)Man(9)GlcNAc(2) in eukaryotes) from the lipid carrier dolichol-pyrophosphate to an asparagine residue within an Asn-X-Ser/Thr consensus motif in nascent polypeptide chains, the first step in protein N-glycosylation. N-glycosylation occurs cotranslationally and the complex associates with the Sec61 complex at the channel-forming translocon complex that mediates protein translocation across the endoplasmic reticulum (ER). All subunits are required for a maximal enzyme activity. Plays a role in cell wall integrity and in engulfment by macrophages. This chain is Dolichyl-diphosphooligosaccharide--protein glycosyltransferase subunit delta, found in Candida albicans (strain SC5314 / ATCC MYA-2876) (Yeast).